The chain runs to 210 residues: Large ribosomal subunit protein uL3 (210 aa).

The protein belongs to the universal ribosomal protein uL3 family. As to quaternary structure, part of the 50S ribosomal subunit. Forms a cluster with proteins L14 and L19.

Its function is as follows. One of the primary rRNA binding proteins, it binds directly near the 3'-end of the 23S rRNA, where it nucleates assembly of the 50S subunit. This Geobacter metallireducens (strain ATCC 53774 / DSM 7210 / GS-15) protein is Large ribosomal subunit protein uL3.